The primary structure comprises 429 residues: MAAAAAVVTPSGLEDEVSRSRGEGAGEMVVERGPGAAYHMFVVMEDLVEKLKLLRYEENLLRKNNLKPPSRHYFALPTNPGEQFYMFCTLAAWLINKAGRPFEQPQEYDDPNAIISNILSELRSFGRTADFPPSKLKSGYGEHVCYVLDCLAEEALKYIGFTWKRPAYPVEELEEETVAEDDAELTLNKVDEEFVEEETDNEENFIDLNVLKAQTYRLDMNESAKQEDILESTTDAAEWSLEVERVLPQLKVTIRTDNKDWRIHVDQMHQHKSGIESALKETKGFLDRLHNEISRTLEKIGSREKYINNQLEHLVQEYRAAQAQLSEARERYQQGNGGVTERTRILSEVTEELEKVKQEMEEKGSSMTDGAPLVKIKQSLTKLKQETVQMDIRIGVVEHTLLQSKLKEKSNMTRDMHATIIPESAIGSY.

The disordered stretch occupies residues 1 to 26; it reads MAAAAAVVTPSGLEDEVSRSRGEGAG. The stretch at 305 to 369 forms a coiled coil; the sequence is KYINNQLEHL…MEEKGSSMTD (65 aa). Residues 335–426 form a pDED region; sequence GNGGVTERTR…HATIIPESAI (92 aa).

The protein belongs to the IFT57 family. In terms of assembly, component of the IFT complex B, at least composed of IFT20, IFT22, IFT25, IFT27, IFT46, IFT52, TRAF3IP1/IFT54, IFT57, IFT74, IFT80, IFT81, and IFT88. Interacts with IFT20. Interacts with IFT88. Interacts with IFT80, IFT-81, IFT74, IFT172, IFT70B and KIF17. Interacts with BLOC1S2. Interacts with RYBP. Interacts with HOMER1; the interaction possibly prevents the pro-apoptotic effects of IFT57. Interacts with HIP1. In normal conditions, it poorly interacts with HIP1, HIP1 being strongly associated with HTT. However, in mutant HTT proteins with a long poly-Gln region, interaction between HTT and HIP1 is inhibited, promoting the interaction between HIP1 and IFT57, leading to apoptosis. Interacts with BFAR. Interacts with TTC25. Interacts with USH1G. In terms of tissue distribution, in retina, detected in the photoreceptor basal body and connecting cilium. Most abundant in the inner segment of photoreceptors (at protein level).

The protein localises to the cell projection. The protein resides in the cilium. Its subcellular location is the cytoplasm. It localises to the cytoskeleton. It is found in the cilium basal body. Functionally, required for the formation of cilia. Plays an indirect role in sonic hedgehog signaling, cilia being required for all activity of the hedgehog pathway. Has pro-apoptotic function via its interaction with HIP1, leading to recruit caspase-8 (CASP8) and trigger apoptosis. Has the ability to bind DNA sequence motif 5'-AAAGACATG-3' present in the promoter of caspase genes such as CASP1, CASP8 and CASP10, suggesting that it may act as a transcription regulator; however the relevance of such function remains unclear. In Bos taurus (Bovine), this protein is Intraflagellar transport protein 57 homolog (IFT57).